A 296-amino-acid polypeptide reads, in one-letter code: Mycothiol acetyltransferase (296 aa).

N-acetyltransferase domains follow at residues 8 to 146 (RSPE…PPVE) and 151 to 296 (ISVR…GPPV). Residue Glu-39 participates in 1D-myo-inositol 2-(L-cysteinylamino)-2-deoxy-alpha-D-glucopyranoside binding. 76-78 (VVT) provides a ligand contact to acetyl-CoA. Residues Glu-178, Lys-220, and Glu-228 each contribute to the 1D-myo-inositol 2-(L-cysteinylamino)-2-deoxy-alpha-D-glucopyranoside site. Acetyl-CoA is bound by residues 232-234 (VGV) and 239-245 (QGEGLGR). Position 266 (Tyr-266) interacts with 1D-myo-inositol 2-(L-cysteinylamino)-2-deoxy-alpha-D-glucopyranoside.

This sequence belongs to the acetyltransferase family. MshD subfamily. As to quaternary structure, monomer.

The enzyme catalyses 1D-myo-inositol 2-(L-cysteinylamino)-2-deoxy-alpha-D-glucopyranoside + acetyl-CoA = mycothiol + CoA + H(+). Its function is as follows. Catalyzes the transfer of acetyl from acetyl-CoA to desacetylmycothiol (Cys-GlcN-Ins) to form mycothiol. The polypeptide is Mycothiol acetyltransferase (Kytococcus sedentarius (strain ATCC 14392 / DSM 20547 / JCM 11482 / CCUG 33030 / NBRC 15357 / NCTC 11040 / CCM 314 / 541) (Micrococcus sedentarius)).